The following is a 362-amino-acid chain: 3-dehydroquinate synthase (362 aa).

NAD(+)-binding positions include Asp-74–Lys-79, Gly-108–Asp-112, Thr-132–Thr-133, Lys-145, Lys-154, and Thr-172–Thr-175. Glu-187, His-250, and His-267 together coordinate Zn(2+).

The protein belongs to the sugar phosphate cyclases superfamily. Dehydroquinate synthase family. It depends on Co(2+) as a cofactor. Requires Zn(2+) as cofactor. NAD(+) is required as a cofactor.

Its subcellular location is the cytoplasm. It catalyses the reaction 7-phospho-2-dehydro-3-deoxy-D-arabino-heptonate = 3-dehydroquinate + phosphate. The protein operates within metabolic intermediate biosynthesis; chorismate biosynthesis; chorismate from D-erythrose 4-phosphate and phosphoenolpyruvate: step 2/7. Catalyzes the conversion of 3-deoxy-D-arabino-heptulosonate 7-phosphate (DAHP) to dehydroquinate (DHQ). This chain is 3-dehydroquinate synthase, found in Geobacter sp. (strain M21).